The sequence spans 178 residues: Transmembrane protein 196 (178 aa).

A run of 4 helical transmembrane segments spans residues 11–31 (LLVL…VGAV), 47–67 (SSPV…ILCA), 73–93 (LVMI…ILNF), and 106–126 (LYPL…GCTL).

Expression is significantly decreased in lung cancer cells compared to normal lung tissue (at protein level).

The protein resides in the cytoplasm. It is found in the membrane. Acts as a tumor suppressor in lung cancer. Inhibits tumor cell growth by inhibiting cell proliferation and migration and promoting cell apoptosis. Inhibits metastasis of lung cancer by suppressing beta-catenin expression in the Wnt/beta-catenin signaling pathway. This chain is Transmembrane protein 196 (TMEM196), found in Homo sapiens (Human).